Here is a 386-residue protein sequence, read N- to C-terminus: 5-amino-6-(D-ribitylamino)uracil--L-tyrosine 4-hydroxyphenyl transferase (386 aa).

Positions 56 to 303 (VSYVINRNLN…MAVARLYLGD (248 aa)) constitute a Radical SAM core domain. 3 residues coordinate [4Fe-4S] cluster: Cys-70, Cys-74, and Cys-77.

This sequence belongs to the radical SAM superfamily. CofH family. As to quaternary structure, consists of two subunits, CofG and CofH. [4Fe-4S] cluster serves as cofactor.

It carries out the reaction 5-amino-6-(D-ribitylamino)uracil + L-tyrosine + S-adenosyl-L-methionine = 5-amino-5-(4-hydroxybenzyl)-6-(D-ribitylimino)-5,6-dihydrouracil + 2-iminoacetate + 5'-deoxyadenosine + L-methionine + H(+). It functions in the pathway cofactor biosynthesis; coenzyme F0 biosynthesis. Catalyzes the radical-mediated synthesis of 5-amino-5-(4-hydroxybenzyl)-6-(D-ribitylimino)-5,6-dihydrouracil from 5-amino-6-(D-ribitylamino)uracil and L-tyrosine. This Synechococcus elongatus (strain ATCC 33912 / PCC 7942 / FACHB-805) (Anacystis nidulans R2) protein is 5-amino-6-(D-ribitylamino)uracil--L-tyrosine 4-hydroxyphenyl transferase.